We begin with the raw amino-acid sequence, 390 residues long: Branched-chain-amino-acid aminotransferase (390 aa).

At Lys-225 the chain carries N6-(pyridoxal phosphate)lysine.

The protein belongs to the class-IV pyridoxal-phosphate-dependent aminotransferase family. In terms of assembly, homodimer. The cofactor is pyridoxal 5'-phosphate.

The enzyme catalyses L-leucine + 2-oxoglutarate = 4-methyl-2-oxopentanoate + L-glutamate. It catalyses the reaction L-isoleucine + 2-oxoglutarate = (S)-3-methyl-2-oxopentanoate + L-glutamate. It carries out the reaction L-valine + 2-oxoglutarate = 3-methyl-2-oxobutanoate + L-glutamate. Catalyzes the first reaction in the catabolism of the essential branched chain amino acids leucine, isoleucine, and valine. The chain is Branched-chain-amino-acid aminotransferase from Monosiga brevicollis (Choanoflagellate).